Consider the following 485-residue polypeptide: Subtilisin-like protease 1 (485 aa).

The signal sequence occupies residues 1–19; that stretch reads MGIFRFISISLAAVSAANA. The propeptide occupies 20–116; sequence GHILSMGHAK…VEPDTTITIH (97 aa). One can recognise an Inhibitor I9 domain in the interval 34–116; it reads SYIVVMKDGT…VEPDTTITIH (83 aa). In terms of domain architecture, Peptidase S8 spans 126 to 400; it reads SWGLARISSQ…NILINNGDAK (275 aa). Catalysis depends on charge relay system residues aspartate 158 and histidine 190. A glycan (N-linked (GlcNAc...) asparagine) is linked at asparagine 251. The active-site Charge relay system is the serine 345. The span at 377–394 shows a compositional bias: polar residues; it reads GTSSVTNPGPGTRTNILI. The disordered stretch occupies residues 377–462; it reads GTSSVTNPGP…HTPFPNDDFN (86 aa). Pro residues predominate over residues 409–418; that stretch reads PSQPPKPSQP. The span at 419–428 shows a compositional bias: low complexity; that stretch reads SKPQQPSEPQ. A compositionally biased stretch (pro residues) spans 433-455; it reads PQEPAPGQPAPAPAPVPQHPHTP.

The protein belongs to the peptidase S8 family.

It localises to the secreted. Its function is as follows. Secreted subtilisin-like serine protease with keratinolytic activity that contributes to pathogenicity. The chain is Subtilisin-like protease 1 (SUB1) from Arthroderma otae (Microsporum canis).